A 480-amino-acid chain; its full sequence is tRNA (guanine(37)-N(1))-methyltransferase (480 aa).

S-adenosyl-L-methionine-binding positions include histidine 244, aspartate 292–leucine 293, aspartate 321–glycine 322, and asparagine 342.

The protein belongs to the class I-like SAM-binding methyltransferase superfamily. TRM5/TYW2 family. As to quaternary structure, monomer.

Its subcellular location is the mitochondrion matrix. The protein resides in the nucleus. It localises to the cytoplasm. It catalyses the reaction guanosine(37) in tRNA + S-adenosyl-L-methionine = N(1)-methylguanosine(37) in tRNA + S-adenosyl-L-homocysteine + H(+). Functionally, specifically methylates the N1 position of guanosine-37 in various cytoplasmic and mitochondrial tRNAs. Methylation is not dependent on the nature of the nucleoside 5' of the target nucleoside. This is the first step in the biosynthesis of wybutosine (yW), a modified base adjacent to the anticodon of tRNAs and required for accurate decoding. This Thalassiosira pseudonana (Marine diatom) protein is tRNA (guanine(37)-N(1))-methyltransferase.